The chain runs to 513 residues: Protein PNS1 (513 aa).

Positions 1-13 (MSNNNYPPPPNPP) are enriched in pro residues. The disordered stretch occupies residues 1 to 41 (MSNNNYPPPPNPPNYQGEEQVHNVQPDLENNQEKYYAEQPQ). Over 1–60 (MSNNNYPPPPNPPNYQGEEQVHNVQPDLENNQEKYYAEQPQPSQQFEESFKIDKPKWNDW) the chain is Cytoplasmic. Residues 61-81 (PFTVFFLLTVAGFIAIAGITL) traverse the membrane as a helical segment. Residues 82-108 (NALKKTYGLQGSSIYNSTDTFTLNTNT) are Extracellular-facing. An N-linked (GlcNAc...) asparagine glycan is attached at asparagine 97. Residues 109-129 (IILFGFIIVVGVVLSVLIIVY) traverse the membrane as a helical segment. Residues 130–136 (ARMAPRV) are Cytoplasmic-facing. The helical transmembrane segment at 137-157 (FITTGLILNIILGLGTCIYYF) threads the bilayer. Residues 158-163 (VAHYYS) lie on the Extracellular side of the membrane. The chain crosses the membrane as a helical span at residues 164-182 (AAIVFLVFTLFTAWCYWSC). At 183–210 (RHRIPFSATVLEITIDVMKRYPSTLITS) the chain is on the cytoplasmic side. Residues 211-231 (FIGIIVSGLFSTLFSVVIVAT) traverse the membrane as a helical segment. Over 232–251 (YVKYDPDSQGCDVAGGGCSQ) the chain is Extracellular. The helical transmembrane segment at 252 to 272 (SKLIGVLVFVFFAGYYISEVI) threads the bilayer. Topologically, residues 273 to 309 (KNVIHITIAGIYGTWYYLSNSDQGEPKHPALGAFKRA) are cytoplasmic. A helical membrane pass occupies residues 310-330 (MTYCFGSVCFGSLIVSIIQLI). Residues 331 to 346 (RSFVQILKQNAFGSGD) lie on the Extracellular side of the membrane. A helical membrane pass occupies residues 347 to 367 (NCAGCGFLILDFVLGFIDWIV). At 368-412 (RYFNHYAYCYVALYGKSYLKSARDTFDLIRFKGMDALINDCFINT) the chain is on the cytoplasmic side. Residues 413 to 433 (SLNLYSMFVGYVVALLAYFYL) traverse the membrane as a helical segment. At 434–460 (KFTDPAYNSSGTFYAPVVAFSFLISGQ) the chain is on the extracellular side. Residue asparagine 441 is glycosylated (N-linked (GlcNAc...) asparagine). Residues 461 to 481 (ITRIALTVISSGISTFFVALA) form a helical membrane-spanning segment. The Cytoplasmic segment spans residues 482-513 (KDPEVFQMTNRDRFDEIFRNYPQVLQKITSDH).

The protein belongs to the CTL (choline transporter-like) family.

Its subcellular location is the cell membrane. Its function is as follows. Probably involved in transport through the plasma membrane. This chain is Protein PNS1 (PNS1), found in Debaryomyces hansenii (strain ATCC 36239 / CBS 767 / BCRC 21394 / JCM 1990 / NBRC 0083 / IGC 2968) (Yeast).